We begin with the raw amino-acid sequence, 118 residues long: Large ribosomal subunit protein uL18 (118 aa).

It belongs to the universal ribosomal protein uL18 family. In terms of assembly, part of the 50S ribosomal subunit; part of the 5S rRNA/L5/L18/L25 subcomplex. Contacts the 5S and 23S rRNAs.

This is one of the proteins that bind and probably mediate the attachment of the 5S RNA into the large ribosomal subunit, where it forms part of the central protuberance. This is Large ribosomal subunit protein uL18 from Rickettsia akari (strain Hartford).